Reading from the N-terminus, the 33-residue chain is Protamine-M6/M7 (33 aa).

Residues 1-33 form a disordered region; the sequence is PRRRRETSRPIRRRRRARRAPIRRRRRVVRRRR.

As to expression, testis.

The protein resides in the nucleus. It localises to the chromosome. Functionally, protamines substitute for histones in the chromatin of sperm during the haploid phase of spermatogenesis. They compact sperm DNA into a highly condensed, stable and inactive complex. The sequence is that of Protamine-M6/M7 from Mugil cephalus (Flathead mullet).